The primary structure comprises 134 residues: Transcription factor atoh7 (134 aa).

A disordered region spans residues 1–27; the sequence is MKPRRPSCADSGSDSDSRDPEKFESAM. The segment covering 15 to 27 has biased composition (basic and acidic residues); the sequence is SDSRDPEKFESAM. Residues 28 to 80 enclose the bHLH domain; that stretch reads RRRMAANARERKRMQGLNTAFDRLRKVVPQWGQDKKLSKYETLQMALSYIMAL.

Its subcellular location is the nucleus. It is found in the perikaryon. The protein resides in the cell projection. The protein localises to the axon. In terms of biological role, transcription factor that binds to DNA at the consensus sequence 5'-CAG[GC]TG-3'. Involved in the differentiation of retinal ganglion cells, photoreceptor population and optic nerve development. Required for retinal circadian rhythm photoentrainment. In Danio rerio (Zebrafish), this protein is Transcription factor atoh7.